A 323-amino-acid chain; its full sequence is uncharacterized protein (323 aa).

A helical membrane pass occupies residues 4–24; sequence IIFAFIILFVFLLPMIIFYQP.

It is found in the membrane. This is an uncharacterized protein from Escherichia coli (strain K12).